The primary structure comprises 484 residues: tRNA sulfurtransferase (484 aa).

The region spanning 61–165 (TLLVELLGRI…NDKMMLIKAR (105 aa)) is the THUMP domain. Residues 183–184 (LI), Lys265, Gly287, and Gln296 contribute to the ATP site. A disulfide bridge links Cys344 with Cys456. Residues 404 to 484 (LSANEVILDI…DNVKVLNKIS (81 aa)) form the Rhodanese domain. Cys456 functions as the Cysteine persulfide intermediate in the catalytic mechanism.

It belongs to the ThiI family.

The protein localises to the cytoplasm. The catalysed reaction is [ThiI sulfur-carrier protein]-S-sulfanyl-L-cysteine + a uridine in tRNA + 2 reduced [2Fe-2S]-[ferredoxin] + ATP + H(+) = [ThiI sulfur-carrier protein]-L-cysteine + a 4-thiouridine in tRNA + 2 oxidized [2Fe-2S]-[ferredoxin] + AMP + diphosphate. The enzyme catalyses [ThiS sulfur-carrier protein]-C-terminal Gly-Gly-AMP + S-sulfanyl-L-cysteinyl-[cysteine desulfurase] + AH2 = [ThiS sulfur-carrier protein]-C-terminal-Gly-aminoethanethioate + L-cysteinyl-[cysteine desulfurase] + A + AMP + 2 H(+). The protein operates within cofactor biosynthesis; thiamine diphosphate biosynthesis. Functionally, catalyzes the ATP-dependent transfer of a sulfur to tRNA to produce 4-thiouridine in position 8 of tRNAs, which functions as a near-UV photosensor. Also catalyzes the transfer of sulfur to the sulfur carrier protein ThiS, forming ThiS-thiocarboxylate. This is a step in the synthesis of thiazole, in the thiamine biosynthesis pathway. The sulfur is donated as persulfide by IscS. The sequence is that of tRNA sulfurtransferase from Histophilus somni (strain 2336) (Haemophilus somnus).